The chain runs to 360 residues: NADH-quinone oxidoreductase subunit H (360 aa).

The next 8 membrane-spanning stretches (helical) occupy residues 20–40, 95–115, 130–150, 176–196, 206–226, 261–281, 297–317, and 336–356; these read GMVW…IPLM, GLFV…WVVI, LLLV…AGWA, FCLL…IVLA, GIGF…VYLI, IFFL…ALMF, IPGW…FIWI, and IFIP…LSPW.

This sequence belongs to the complex I subunit 1 family. NDH-1 is composed of 14 different subunits. Subunits NuoA, H, J, K, L, M, N constitute the membrane sector of the complex.

It is found in the cell inner membrane. It catalyses the reaction a quinone + NADH + 5 H(+)(in) = a quinol + NAD(+) + 4 H(+)(out). Functionally, NDH-1 shuttles electrons from NADH, via FMN and iron-sulfur (Fe-S) centers, to quinones in the respiratory chain. The immediate electron acceptor for the enzyme in this species is believed to be ubiquinone. Couples the redox reaction to proton translocation (for every two electrons transferred, four hydrogen ions are translocated across the cytoplasmic membrane), and thus conserves the redox energy in a proton gradient. This subunit may bind ubiquinone. This is NADH-quinone oxidoreductase subunit H from Verminephrobacter eiseniae (strain EF01-2).